Consider the following 1684-residue polypeptide: GRIP and coiled-coil domain-containing protein 2 (1684 aa).

The residue at position 1 (Met1) is an N-acetylmethionine. Residues 1–22 are disordered; sequence MEDLVQDGVASPATPGTGKSKL. Ser11 bears the Phosphoserine mark. The residue at position 14 (Thr14) is a Phosphothreonine. A coiled-coil region spans residues 110–1618; sequence VTKMGDAHKE…REKSAANLEY (1509 aa). A phosphoserine mark is found at Ser236, Ser1483, and Ser1487. A disordered region spans residues 1475–1502; sequence LKNEPTTRSPVSSQQSLKNLRERRNTDL. Residues 1477–1492 are compositionally biased toward polar residues; that stretch reads NEPTTRSPVSSQQSLK. The tract at residues 1574–1613 is mediates interaction with RAB6A; it reads HLNGLLRETEATNAILMEQIKLLKSEIRRLERNQEREKSA. Positions 1574 to 1684 are mediates interaction with RAB9A; the sequence is HLNGLLRETE…SYLHSWSGLR (111 aa). Residues 1609–1659 enclose the GRIP domain; the sequence is REKSAANLEYLKNVLLQFIFLKPGSERERLLPVINTMLQLSPEEKGKLAAV.

As to quaternary structure, homodimer. Interacts (via GRIP domain) with RAB6A (preferentially in its GTP-bound form). May interact (RAB6A-dependent) with ARL1; according to PubMed:19703403, RAB6A and ARL1 are not involved in GCC2 Golgi localization as proposed by PubMed:18243103. Interacts (probably via GRIP domain) with RAB9A (preferentially in its GTP-bound form). Interacts with CLASP1 and CLASP2; recruits both proteins to membranes of the TGN. Interacts with STX16. As to expression, ubiquitous.

Its subcellular location is the cytoplasm. It is found in the golgi apparatus. The protein localises to the trans-Golgi network membrane. In terms of biological role, golgin which probably tethers transport vesicles to the trans-Golgi network (TGN) and regulates vesicular transport between the endosomes and the Golgi. As a RAB9A effector it is involved in recycling of the mannose 6-phosphate receptor from the late endosomes to the TGN. May also play a role in transport between the recycling endosomes and the Golgi. Required for maintenance of the Golgi structure, it is involved in the biogenesis of noncentrosomal, Golgi-associated microtubules through recruitment of CLASP1 and CLASP2. This is GRIP and coiled-coil domain-containing protein 2 (GCC2) from Homo sapiens (Human).